We begin with the raw amino-acid sequence, 206 residues long: Large ribosomal subunit protein uL13 (206 aa).

Belongs to the universal ribosomal protein uL13 family.

In Picea mariana (Black spruce), this protein is Large ribosomal subunit protein uL13 (RPL13A).